Reading from the N-terminus, the 309-residue chain is Porphobilinogen deaminase (309 aa).

The residue at position 241 (Cys241) is an S-(dipyrrolylmethanemethyl)cysteine.

This sequence belongs to the HMBS family. As to quaternary structure, monomer. Dipyrromethane serves as cofactor.

The catalysed reaction is 4 porphobilinogen + H2O = hydroxymethylbilane + 4 NH4(+). It functions in the pathway porphyrin-containing compound metabolism; protoporphyrin-IX biosynthesis; coproporphyrinogen-III from 5-aminolevulinate: step 2/4. Tetrapolymerization of the monopyrrole PBG into the hydroxymethylbilane pre-uroporphyrinogen in several discrete steps. In Bacillus mycoides (strain KBAB4) (Bacillus weihenstephanensis), this protein is Porphobilinogen deaminase.